Consider the following 254-residue polypeptide: MTLLAIDIGNTRLKWALYPSAVPGSEPVAHGARFLETIDQLGEAEWAGLAPPPRHVLGCCVASDSVRHRVEEQLELWDVAPRWVVPGAAEAGVTNGYDHPMRLGSDRWVALIGARARVLAAGARRPVLVVMAGTAVTVDALDADGRFLGGLILPGHGIMLRALEAGTAGLRVPTGEVREFPTNTSDALTSGGNFAIAGAIERMHRHLQQRCGEPPLCIVTGGAGWKVVPALTIDHELIDTLIFDGLLTIAAQRG.

7-14 (DIGNTRLK) contributes to the ATP binding site. Residues tyrosine 97 and 104–107 (GSDR) each bind substrate. The active-site Proton acceptor is the aspartate 106. Threonine 134 provides a ligand contact to ATP. Threonine 184 is a binding site for substrate.

Belongs to the type III pantothenate kinase family. As to quaternary structure, homodimer. NH4(+) serves as cofactor. K(+) is required as a cofactor.

The protein localises to the cytoplasm. The catalysed reaction is (R)-pantothenate + ATP = (R)-4'-phosphopantothenate + ADP + H(+). It functions in the pathway cofactor biosynthesis; coenzyme A biosynthesis; CoA from (R)-pantothenate: step 1/5. Its function is as follows. Catalyzes the phosphorylation of pantothenate (Pan), the first step in CoA biosynthesis. The polypeptide is Type III pantothenate kinase (Methylibium petroleiphilum (strain ATCC BAA-1232 / LMG 22953 / PM1)).